The following is a 180-amino-acid chain: PLASMODESMATA CALLOSE-BINDING PROTEIN 5 (180 aa).

The signal sequence occupies residues 1 to 29 (MIMSLPQCSHLRLSILAATAAMLMVITTA). A disulfide bridge connects residues Cys42 and Cys105. The interval 126 to 151 (PSSKGANNGRLADDTSMGAGQADMSR) is disordered. Ser157 is lipidated: GPI-anchor amidated serine. Residues 158–180 (SSWMVTFIGFGSLLTMTWIIHHL) constitute a propeptide, removed in mature form.

In terms of processing, contains two additional disulfide bonds.

It localises to the cell membrane. The protein resides in the cell junction. It is found in the plasmodesma. The sequence is that of PLASMODESMATA CALLOSE-BINDING PROTEIN 5 (PDCB5) from Arabidopsis thaliana (Mouse-ear cress).